Consider the following 139-residue polypeptide: Probable disulfide formation protein C 2 (139 aa).

The chain crosses the membrane as a helical span at residues 6 to 25 (KYHIAIAWMIATSAMLISLF). Residues C35 and C38 are joined by a disulfide bond. 2 helical membrane passes run 40 to 59 (YQRMAMYPLVLILGIGMYRK) and 66 to 83 (YAFPFTCIGLILSVYQIT). An intrachain disulfide couples C95 to C101. The helical transmembrane segment at 110-133 (GFISIPMLSFIGFLVIIILIYIES) threads the bilayer.

The protein belongs to the DsbB family. BdbC subfamily.

The protein localises to the cell membrane. In terms of biological role, required for disulfide bond formation in some proteins. The protein is Probable disulfide formation protein C 2 (bdbC2) of Bacillus cereus (strain ATCC 10987 / NRS 248).